The primary structure comprises 211 residues: Shikimate kinase (211 aa).

The span at 1-13 shows a compositional bias: low complexity; the sequence is MNASANLCAASAN. The tract at residues 1 to 24 is disordered; the sequence is MNASANLCAASANDPQPGDQEAAH. 50 to 55 contributes to the ATP binding site; sequence GAGKTT. Mg(2+) is bound at residue Thr-54. Residues Asp-72, Arg-96, and Gly-118 each coordinate substrate. ATP is bound at residue Arg-156. Arg-175 contacts substrate.

This sequence belongs to the shikimate kinase family. Monomer. Requires Mg(2+) as cofactor.

Its subcellular location is the cytoplasm. The catalysed reaction is shikimate + ATP = 3-phosphoshikimate + ADP + H(+). It functions in the pathway metabolic intermediate biosynthesis; chorismate biosynthesis; chorismate from D-erythrose 4-phosphate and phosphoenolpyruvate: step 5/7. Its function is as follows. Catalyzes the specific phosphorylation of the 3-hydroxyl group of shikimic acid using ATP as a cosubstrate. The protein is Shikimate kinase of Bordetella parapertussis (strain 12822 / ATCC BAA-587 / NCTC 13253).